A 315-amino-acid polypeptide reads, in one-letter code: Protoheme IX farnesyltransferase (315 aa).

9 helical membrane passes run Ile-38–Pro-58, Leu-62–Met-82, Leu-111–Trp-131, Leu-132–Leu-152, Asn-159–Thr-179, Trp-184–Leu-204, Ile-233–Thr-253, Trp-255–Leu-275, and Leu-293–Phe-313.

The protein belongs to the UbiA prenyltransferase family. Protoheme IX farnesyltransferase subfamily.

It localises to the cell membrane. The catalysed reaction is heme b + (2E,6E)-farnesyl diphosphate + H2O = Fe(II)-heme o + diphosphate. It participates in porphyrin-containing compound metabolism; heme O biosynthesis; heme O from protoheme: step 1/1. In terms of biological role, converts heme B (protoheme IX) to heme O by substitution of the vinyl group on carbon 2 of heme B porphyrin ring with a hydroxyethyl farnesyl side group. The chain is Protoheme IX farnesyltransferase from Streptomyces coelicolor (strain ATCC BAA-471 / A3(2) / M145).